A 559-amino-acid chain; its full sequence is Branched-chain-amino-acid aminotransferase-like protein 2 (559 aa).

The protein belongs to the class-IV pyridoxal-phosphate-dependent aminotransferase family.

The chain is Branched-chain-amino-acid aminotransferase-like protein 2 from Arabidopsis thaliana (Mouse-ear cress).